The primary structure comprises 388 residues: Sphingosine N-acyltransferase-like protein FUM17 (388 aa).

Transmembrane regions (helical) follow at residues 60 to 80 and 113 to 133; these read SWAL…IHPV and LWDL…RKFI. A glycan (N-linked (GlcNAc...) asparagine) is linked at N146. In terms of domain architecture, TLC spans 151–368; it reads GKQQRFMEQM…LLRNAYRLLF (218 aa). 4 helical membrane passes run 166 to 186, 204 to 224, 241 to 261, and 339 to 359; these read FAVM…LWIF, IKFY…VLVL, IITI…IGIS, and FITF…LYCL.

Belongs to the sphingosine N-acyltransferase family.

Its subcellular location is the endoplasmic reticulum membrane. Its pathway is mycotoxin biosynthesis. Sphingosine N-acyltransferase-like protein; part of the gene cluster that mediates the biosynthesis of fumonisins B1 (FB1), B2 (FB2), B3 (FB3), and B4 (FB4), which are carcinogenic mycotoxins. May contribute to the biosynthesis of ceramide via interaction with Cer3. Does not confer resistance to FB1. The biosynthesis starts with the FUM1-catalyzed carbon chain assembly from one molecule of acetyl-CoA, eight molecules of malonyl-CoA, and two molecules of methionine (in S-adenosyl form). The C18 polyketide chain is released from the enzyme by a nucleophilic attack of a carbanion, which is derived from R-carbon of alanine by decarboxylation, on the carbonyl carbon of polyketide acyl chain. This step is catalyzed by the pyridoxal 5'-phosphate-dependent aminoacyl transferase FUM8. The resultant 3-keto intermediate is then stereospecifically reduced to a 3-hydroxyl product by reductase FUM13. Subsequent oxidations at C-10 by the cytochrome P450 monooxygenase FUM2, C-14 and C-15 by FUM6, FUM12 or FUM15, tricarballylic esterification of the hydroxyl groups on C-14 and C-15 by acyltransferase FUM14, and C-5 hydroxylation by 2-keto-glutarate-dependent dioxygenase FUM3 furnish the biosynthesis of fumonisins. The tricarballylic moieties are most likely derived from the citric acid cycle, and their addition to the carbon backbone may involve FUM7, FUM10, FUM11 and FUM14. This Gibberella moniliformis (strain M3125 / FGSC 7600) (Maize ear and stalk rot fungus) protein is Sphingosine N-acyltransferase-like protein FUM17.